An 812-amino-acid chain; its full sequence is Plasminogen (812 aa).

An N-terminal signal peptide occupies residues 1 to 19 (MDHKEVILLFLLLLKPGQG). The 79-residue stretch at 20-98 (DSLDGYISTQ…RDVILFEKRV (79 aa)) folds into the PAN domain. 21 cysteine pairs are disulfide-bonded: Cys49/Cys73, Cys53/Cys61, Cys103/Cys181, Cys124/Cys164, Cys152/Cys176, Cys185/Cys262, Cys188/Cys316, Cys206/Cys245, Cys234/Cys257, Cys275/Cys352, Cys296/Cys335, Cys324/Cys347, Cys377/Cys454, Cys398/Cys437, Cys426/Cys449, Cys481/Cys560, Cys502/Cys543, Cys531/Cys555, Cys568/Cys687, Cys578/Cys586, and Cys609/Cys625. Kringle domains follow at residues 103–181 (CKTG…IPEC), 184–262 (ECMY…IPRC), 275–352 (CLKG…IPSC), 377–454 (CYQS…LKRC), and 481–560 (CMYG…IPLC). The 229-residue stretch at 582 to 810 (VVGGCVANPH…FVDWIEREMR (229 aa)) folds into the Peptidase S1 domain. Ser598 bears the Phosphoserine mark. Residues His624 and Asp667 each act as charge relay system in the active site. A Phosphoserine modification is found at Ser690. 3 cysteine pairs are disulfide-bonded: Cys701-Cys768, Cys731-Cys747, and Cys758-Cys786. Ser762 functions as the Charge relay system in the catalytic mechanism.

This sequence belongs to the peptidase S1 family. Plasminogen subfamily. As to quaternary structure, interacts (both mature PLG and the angiostatin peptide) with AMOT and CSPG4. Interacts (via the Kringle domains) with HRG; the interaction tethers PLG to the cell surface and enhances its activation. Interacts (via Kringle 4 domain) with ADA; the interaction stimulates PLG activation when in complex with DPP4. Angiostatin: Interacts with ATP5F1A; the interaction inhibits most of the angiogenic effects of angiostatin. In the presence of the inhibitor, the activation involves only cleavage after Arg-581, yielding two chains held together by two disulfide bonds. In the absence of the inhibitor, the activation involves additionally the removal of the activation peptide.

The protein localises to the secreted. It carries out the reaction Preferential cleavage: Lys-|-Xaa &gt; Arg-|-Xaa, higher selectivity than trypsin. Converts fibrin into soluble products.. Its activity is regulated as follows. Converted into plasmin by plasminogen activators, both plasminogen and its activator being bound to fibrin. Cannot be activated with streptokinase. Functionally, plasmin dissolves the fibrin of blood clots and acts as a proteolytic factor in a variety of other processes including embryonic development, tissue remodeling, tumor invasion, and inflammation. In ovulation, weakens the walls of the Graafian follicle. It activates the urokinase-type plasminogen activator, collagenases and several complement zymogens, such as C1, C4 and C5. Cleavage of fibronectin and laminin leads to cell detachment and apoptosis. Also cleaves fibrin, thrombospondin and von Willebrand factor. Its role in tissue remodeling and tumor invasion may be modulated by CSPG4. Binds to cells. Angiostatin is an angiogenesis inhibitor that blocks neovascularization and growth of experimental primary and metastatic tumors in vivo. This chain is Plasminogen (Plg), found in Mus musculus (Mouse).